A 484-amino-acid polypeptide reads, in one-letter code: Poly(A) RNA polymerase GLD2 (484 aa).

Phosphoserine is present on residues Ser62 and Ser69. Positions 76–92 (KRISDEKAFRLDGKRQR) match the Nuclear localization signal motif. The residue at position 95 (Ser95) is a Phosphoserine. Residues Asp213 and Asp215 each coordinate Mg(2+). Residues 386–440 (SLGDLLLGFLKYYATEFDWNTQMISVREAKAIPRPDDMEWRNKYICVEEPFDGTN) enclose the PAP-associated domain.

It belongs to the DNA polymerase type-B-like family. GLD2 subfamily. In terms of assembly, interacts with CPEB1, CPEB2, CPSF1 and PABPC1. Interacts with QKI isoform QKI7; promoting recruitment to miRNA miR-122 and miR-122 stabilization. The cofactor is Mg(2+). Mn(2+) is required as a cofactor.

The protein resides in the cytoplasm. It localises to the nucleus. It carries out the reaction RNA(n) + ATP = RNA(n)-3'-adenine ribonucleotide + diphosphate. Cytoplasmic poly(A) RNA polymerase that adds successive AMP monomers to the 3'-end of specific RNAs, forming a poly(A) tail. In contrast to the canonical nuclear poly(A) RNA polymerase, it only adds poly(A) to selected cytoplasmic mRNAs. Does not play a role in replication-dependent histone mRNA degradation. Adds a single nucleotide to the 3' end of specific miRNAs, monoadenylation stabilizes and prolongs the activity of some but not all miRNAs. The protein is Poly(A) RNA polymerase GLD2 of Rattus norvegicus (Rat).